We begin with the raw amino-acid sequence, 279 residues long: Urease accessory protein UreD (279 aa).

This sequence belongs to the UreD family. UreD, UreF and UreG form a complex that acts as a GTP-hydrolysis-dependent molecular chaperone, activating the urease apoprotein by helping to assemble the nickel containing metallocenter of UreC. The UreE protein probably delivers the nickel.

The protein localises to the cytoplasm. Required for maturation of urease via the functional incorporation of the urease nickel metallocenter. This chain is Urease accessory protein UreD, found in Nitrosospira multiformis (strain ATCC 25196 / NCIMB 11849 / C 71).